The chain runs to 516 residues: Putative glucosylceramidase 2 (516 aa).

Residues 1–23 (MSIAWSCFVLGLFALASLQVALA) form the signal peptide. E254 (proton donor) is an active-site residue. E358 acts as the Nucleophile in catalysis.

Belongs to the glycosyl hydrolase 30 family.

The enzyme catalyses a beta-D-glucosylceramide + H2O = an N-acyl-sphingoid base + D-glucose. It catalyses the reaction a beta-D-glucosyl-(1&lt;-&gt;1')-N-acylsphing-4-enine + H2O = an N-acylsphing-4-enine + D-glucose. It carries out the reaction an N-acyl-1-beta-D-glucosyl-15-methylhexadecasphing-4-enine + H2O = an N-acyl-15-methylhexadecasphing-4-enine + D-glucose. It functions in the pathway lipid metabolism; sphingolipid metabolism. Glucosylceramidase that catalyzes the hydrolysis of glucosylceramides into free ceramides and glucose. C.elegans contain specific sphingoid bases, which are unique or different in structure compared to the sphingoid bases found in other animals. Two examples of these distinctive compounds are: 15-methylhexadecasphinganine and 15-methylhexadecasphing-4-enine. In Caenorhabditis elegans, this protein is Putative glucosylceramidase 2 (gba-2).